The chain runs to 207 residues: Large ribosomal subunit protein uL4 (207 aa).

Residues 49-73 (AKKRGEVSGGGKKPWKQKGGGRARA) form a disordered region.

The protein belongs to the universal ribosomal protein uL4 family. Part of the 50S ribosomal subunit.

Functionally, one of the primary rRNA binding proteins, this protein initially binds near the 5'-end of the 23S rRNA. It is important during the early stages of 50S assembly. It makes multiple contacts with different domains of the 23S rRNA in the assembled 50S subunit and ribosome. In terms of biological role, forms part of the polypeptide exit tunnel. The polypeptide is Large ribosomal subunit protein uL4 (Helicobacter hepaticus (strain ATCC 51449 / 3B1)).